We begin with the raw amino-acid sequence, 175 residues long: Gamma-crystallin B (175 aa).

Beta/gamma crystallin 'Greek key' domains lie at 2-40 and 41-83; these read GKITFYEDRAFQGRSYECTTDCPNLQPYFSRCNSIRVES and GCWM…HLIP. The interval 84 to 88 is connecting peptide; that stretch reads PHSGT. 2 Beta/gamma crystallin 'Greek key' domains span residues 89 to 129 and 130 to 172; these read YRMK…NVLE and GSWI…RRVM.

Belongs to the beta/gamma-crystallin family. In terms of assembly, monomer.

Functionally, crystallins are the dominant structural components of the vertebrate eye lens. The chain is Gamma-crystallin B (CRYGB) from Macaca mulatta (Rhesus macaque).